The following is a 113-amino-acid chain: Hydrogenase maturation factor HypA (113 aa).

Histidine 2 lines the Ni(2+) pocket. Zn(2+) is bound by residues cysteine 73, cysteine 76, cysteine 89, and cysteine 92.

This sequence belongs to the HypA/HybF family.

Functionally, involved in the maturation of [NiFe] hydrogenases. Required for nickel insertion into the metal center of the hydrogenase. In Aeromonas hydrophila subsp. hydrophila (strain ATCC 7966 / DSM 30187 / BCRC 13018 / CCUG 14551 / JCM 1027 / KCTC 2358 / NCIMB 9240 / NCTC 8049), this protein is Hydrogenase maturation factor HypA.